Reading from the N-terminus, the 282-residue chain is Endo-1,4-beta-xylanase B (282 aa).

The first 39 residues, 1–39, serve as a signal peptide directing secretion; sequence MGISSILLSALIAGGALALPAAEPVSFDIRDENITLARR. N-linked (GlcNAc...) asparagine glycosylation occurs at N33. One can recognise a GH11 domain in the interval 40-219; it reads AEAINYNQDY…GSGSGQISLS (180 aa). Residue E117 is the Nucleophile of the active site. E206 serves as the catalytic Proton donor. Residues 214-245 form a disordered region; that stretch reads GQISLSKGTGGGSTTTTPTGPTSTSTAPSSGG. A compositionally biased stretch (low complexity) spans 227 to 243; sequence TTTTPTGPTSTSTAPSS. Residues 246 to 282 form the CBM1 domain; the sequence is TGAAQWGQCGGIGWTGPTTCVAPYTCKYENAYYSQCQ.

Belongs to the glycosyl hydrolase 11 (cellulase G) family.

The protein resides in the secreted. The enzyme catalyses Endohydrolysis of (1-&gt;4)-beta-D-xylosidic linkages in xylans.. The protein operates within glycan degradation; xylan degradation. With respect to regulation, significantly inhibited by the wheat xylanase inhibiting protein I (XIP-I) and the proteinaceous endoxylanase Triticum aestivum xylanase inhibitors I (TAXI-I), but not TAXI-II. Its function is as follows. Endo-1,4-beta-xylanase involved in the hydrolysis of xylan, a major structural heterogeneous polysaccharide found in plant biomass representing the second most abundant polysaccharide in the biosphere, after cellulose. The polypeptide is Endo-1,4-beta-xylanase B (xynB) (Talaromyces funiculosus (Fruitlet core rot fungus)).